Reading from the N-terminus, the 1898-residue chain is Receptor-type tyrosine-protein phosphatase F (1898 aa).

The signal sequence occupies residues 1-29 (MAPEPAPGRRMVPLVPALVMLGLMAGAHG). Residues 30-1254 (DSKPVFVKVP…QQQEEPEMLW (1225 aa)) are Extracellular-facing. 3 Ig-like C2-type domains span residues 33–123 (PVFV…AKLS), 135–224 (PTID…ANLY), and 232–314 (PRFS…AQVT). Cys-54 and Cys-107 are oxidised to a cystine. Heparin is bound at residue 68–77 (KKGKKVSSQR). The N-linked (GlcNAc...) asparagine glycan is linked to Asn-117. A disulfide bridge connects residues Cys-156 and Cys-207. Asn-250 and Asn-295 each carry an N-linked (GlcNAc...) asparagine glycan. An intrachain disulfide couples Cys-253 to Cys-298. 8 Fibronectin type-III domains span residues 321 to 411 (PPID…TGEQ), 416 to 510 (PPRR…TQQG), 514 to 604 (QPAD…TAQS), 609 to 706 (PPQK…TDED), 711 to 810 (PPRK…TTGA), 811 to 904 (VPGR…TPED), 909 to 1001 (FPQN…TMPV), and 1005 to 1089 (FAKN…TAPD). Residues 693–712 (GPESSPVLVRTDEDVPSGPP) are disordered. Residue Asn-721 is glycosylated (N-linked (GlcNAc...) asparagine). Asn-941, Asn-957, and Asn-960 each carry an N-linked (GlcNAc...) asparagine glycan. The chain crosses the membrane as a helical span at residues 1255–1275 (VTGPVLAVILIILIVIAILLF). Residues 1276-1898 (KRKRTHSPSS…YLGSFDHYAT (623 aa)) lie on the Cytoplasmic side of the membrane. Ser-1296 is modified (phosphoserine). Tyrosine-protein phosphatase domains lie at 1343-1598 (FSQE…LLEA) and 1630-1889 (MELE…ALEY). Residues Asp-1507, 1539–1545 (CSAGVGR), and Gln-1583 each bind substrate. Cys-1539 (phosphocysteine intermediate) is an active-site residue. Cys-1830 acts as the Phosphocysteine intermediate in catalysis.

The protein belongs to the protein-tyrosine phosphatase family. Receptor class 2A subfamily. As to quaternary structure, interacts with GRIP1. Interacts with PPFIA1, PPFIA2 and PPFIA3. Interacts with PTPRF. Expressed in the cell of the T lineage but not in cells of any other hemopoietic lineage.

The protein resides in the membrane. The catalysed reaction is O-phospho-L-tyrosyl-[protein] + H2O = L-tyrosyl-[protein] + phosphate. Functionally, possible cell adhesion receptor. It possesses an intrinsic protein tyrosine phosphatase activity (PTPase) and dephosphorylates EPHA2 regulating its activity. This Mus musculus (Mouse) protein is Receptor-type tyrosine-protein phosphatase F (Ptprf).